The following is a 348-amino-acid chain: uncharacterized protein (348 aa).

May be involved in apoptosis regulation. This is an uncharacterized protein from Rattus norvegicus (Rat).